The primary structure comprises 564 residues: Ferric/cupric reductase transmembrane component 2 (564 aa).

The next 2 membrane-spanning stretches (helical) occupy residues 10–30 (TLGS…LFLL) and 66–86 (FIFL…LVML). Asn-106 carries an N-linked (GlcNAc...) asparagine glycan. Residues 110–130 (VAARLGYLSCGLFFVSYFFSL) traverse the membrane as a helical segment. The 116-residue stretch at 114–229 (LGYLSCGLFF…TCSVLIIFLI (116 aa)) folds into the Ferric oxidoreductase domain. Residues His-150 and His-164 each contribute to the heme site. Transmembrane regions (helical) follow at residues 152-172 (WLSV…MIFS), 184-204 (ISIY…ASLP), and 210-230 (FFEW…FLIW). The heme site is built by His-218 and His-232. Positions 254–410 (RLFRSIWNRS…DGPYGTTSNV (157 aa)) constitute an FAD-binding FR-type domain. The N-linked (GlcNAc...) asparagine glycan is linked to Asn-261. 310–316 (HPFTLAS) is an FAD binding site. An N-linked (GlcNAc...) asparagine glycan is attached at Asn-350. 419-427 (LIAGGVGFS) lines the NAD(+) pocket. Residues Asn-442, Asn-496, and Asn-548 are each glycosylated (N-linked (GlcNAc...) asparagine).

It belongs to the ferric reductase (FRE) family. FAD serves as cofactor. Heme is required as a cofactor.

It localises to the cell membrane. The protein resides in the endoplasmic reticulum membrane. The enzyme catalyses 2 a Fe(II)-siderophore + NADP(+) + H(+) = 2 a Fe(III)-siderophore + NADPH. Functionally, metalloreductase responsible for reducing extracellular iron and copper prior to import. Catalyzes the reductive uptake of Fe(3+)-salts and Fe(3+) bound to catecholate or hydroxamate siderophores. Fe(3+) is reduced to Fe(2+), which then dissociates from the siderophore and can be imported by the high-affinity Fe(2+) transport complex in the plasma membrane. Also participates in Cu(2+) reduction and Cu(+) uptake. This chain is Ferric/cupric reductase transmembrane component 2 (frp2), found in Schizosaccharomyces pombe (strain 972 / ATCC 24843) (Fission yeast).